Reading from the N-terminus, the 227-residue chain is Acyl-protein thioesterase 1 (227 aa).

Residues serine 119, aspartate 173, and histidine 207 each act as charge relay system in the active site.

This sequence belongs to the AB hydrolase superfamily. AB hydrolase 2 family.

The protein resides in the cytoplasm. It is found in the nucleus. The enzyme catalyses S-hexadecanoyl-L-cysteinyl-[protein] + H2O = L-cysteinyl-[protein] + hexadecanoate + H(+). Functionally, hydrolyzes fatty acids from S-acylated cysteine residues in proteins with a strong preference for palmitoylated G-alpha proteins over other acyl substrates. Mediates the deacylation of G-alpha proteins such as GPA1 in vivo, but has weak or no activity toward palmitoylated Ras proteins. Has weak lysophospholipase activity in vitro; however such activity may not exist in vivo. The protein is Acyl-protein thioesterase 1 of Yarrowia lipolytica (strain CLIB 122 / E 150) (Yeast).